The sequence spans 120 residues: Large ribosomal subunit protein uL18 (120 aa).

Belongs to the universal ribosomal protein uL18 family. Part of the 50S ribosomal subunit; part of the 5S rRNA/L5/L18/L25 subcomplex. Contacts the 5S and 23S rRNAs.

In terms of biological role, this is one of the proteins that bind and probably mediate the attachment of the 5S RNA into the large ribosomal subunit, where it forms part of the central protuberance. The protein is Large ribosomal subunit protein uL18 of Methylorubrum populi (strain ATCC BAA-705 / NCIMB 13946 / BJ001) (Methylobacterium populi).